The primary structure comprises 262 residues: Shikimate dehydrogenase (NADP(+)) (262 aa).

Shikimate-binding positions include 15-17 (SRS) and Thr62. Lys66 acts as the Proton acceptor in catalysis. Glu78 is a binding site for NADP(+). Residues Asn87 and Asp102 each contribute to the shikimate site. NADP(+) contacts are provided by residues 126–130 (GAGGA), 150–155 (NRTLAR), and Met214. Tyr216 serves as a coordination point for shikimate. NADP(+) is bound at residue Gly236.

This sequence belongs to the shikimate dehydrogenase family. In terms of assembly, homodimer.

The enzyme catalyses shikimate + NADP(+) = 3-dehydroshikimate + NADPH + H(+). Its pathway is metabolic intermediate biosynthesis; chorismate biosynthesis; chorismate from D-erythrose 4-phosphate and phosphoenolpyruvate: step 4/7. In terms of biological role, involved in the biosynthesis of the chorismate, which leads to the biosynthesis of aromatic amino acids. Catalyzes the reversible NADPH linked reduction of 3-dehydroshikimate (DHSA) to yield shikimate (SA). This Acinetobacter baumannii (strain ATCC 17978 / DSM 105126 / CIP 53.77 / LMG 1025 / NCDC KC755 / 5377) protein is Shikimate dehydrogenase (NADP(+)).